The following is an 851-amino-acid chain: Protein BCK2 (851 aa).

Over residues 1–10 (MPKNSHHHRS) the composition is skewed to basic residues. 5 disordered regions span residues 1–91 (MPKN…RKKS), 233–271 (EVVP…MNTK), 315–355 (SLSL…LPEE), 466–504 (FLDG…YITT), and 698–722 (HASR…PNNV). Positions 11–23 (SSVNSTKSRSTES) are enriched in low complexity. The span at 37–66 (ASGSTQASPDRNSSTGSCSTPVLPTMNVMS) shows a compositional bias: polar residues. The span at 71–81 (VLLEDPRDNHT) shows a compositional bias: basic and acidic residues. Composition is skewed to polar residues over residues 254–271 (SETN…MNTK), 334–349 (SPRT…SQSK), 489–504 (ISDA…YITT), and 702–722 (SESN…PNNV). The residue at position 334 (Ser-334) is a Phosphoserine. A phosphoserine mark is found at Ser-757 and Ser-761.

Dosage dependent suppressor of PKC1 deletion and MPK1 deletion. Involved in cell lysis. This Saccharomyces cerevisiae (strain ATCC 204508 / S288c) (Baker's yeast) protein is Protein BCK2 (BCK2).